The sequence spans 1025 residues: Putative receptor-like protein kinase At3g47110 (1025 aa).

The first 30 residues, 1 to 30 (MGVPCIVMRLILVSALLVSVSLEHSDMVCA), serve as a signal peptide directing secretion. The Extracellular portion of the chain corresponds to 31 to 653 (QTIRLTEETD…LPRRHSSVRK (623 aa)). N-linked (GlcNAc...) asparagine glycosylation is found at asparagine 63 and asparagine 103. LRR repeat units follow at residues 104 to 128 (LSFL…VGNL), 130 to 151 (RLQY…VLSN), 152 to 175 (CSSL…EFGS), 176 to 200 (LSKL…LGNL), 202 to 224 (SLQM…IARL), 226 to 248 (QMIF…IYNL), 249 to 271 (SSLI…DFGS), 273 to 297 (LPNL…LSNI), 298 to 323 (SSLR…RLQN), and 325 to 344 (LLLG…DLDF). Asparagine 135 and asparagine 151 each carry an N-linked (GlcNAc...) asparagine glycan. Residues asparagine 188 and asparagine 199 are each glycosylated (N-linked (GlcNAc...) asparagine). N-linked (GlcNAc...) asparagine glycosylation is present at asparagine 247. Asparagine 296 is a glycosylation site (N-linked (GlcNAc...) asparagine). 4 N-linked (GlcNAc...) asparagine glycosylation sites follow: asparagine 331, asparagine 336, asparagine 350, and asparagine 374. 11 LRR repeats span residues 351 to 374 (CSQL…FIAN), 376 to 400 (STQL…IGNL), 401 to 424 (VSLQ…LGEL), 426 to 448 (ELRK…LGNI), 449 to 472 (SGLT…LGSC), 473 to 496 (SYLL…LMEL), 498 to 520 (SLVV…IGKL), 521 to 544 (KFLL…LANC), 546 to 567 (SLEF…IRGL), 568 to 593 (TGLR…NFSK), and 595 to 616 (QNLN…VFRN). Asparagine 447, asparagine 458, asparagine 486, and asparagine 503 each carry an N-linked (GlcNAc...) asparagine glycan. Asparagine 579, asparagine 590, asparagine 598, and asparagine 616 each carry an N-linked (GlcNAc...) asparagine glycan. The chain crosses the membrane as a helical span at residues 654 to 674 (IITICVSAVMAALLLLCLCVV). At 675 to 1025 (YLCWYKLRVK…RESFFRDEET (351 aa)) the chain is on the cytoplasmic side. Threonine 716 carries the post-translational modification Phosphothreonine. One can recognise a Protein kinase domain in the interval 719-1020 (FSSSNLIGSG…KLVSIRESFF (302 aa)). ATP-binding positions include 725–733 (IGSGNFGAV) and lysine 748. 2 positions are modified to phosphotyrosine: tyrosine 798 and tyrosine 843. Residue aspartate 856 is the Proton acceptor of the active site. At tyrosine 904 the chain carries Phosphotyrosine.

It belongs to the protein kinase superfamily. Ser/Thr protein kinase family.

It is found in the cell membrane. The catalysed reaction is L-seryl-[protein] + ATP = O-phospho-L-seryl-[protein] + ADP + H(+). It catalyses the reaction L-threonyl-[protein] + ATP = O-phospho-L-threonyl-[protein] + ADP + H(+). This Arabidopsis thaliana (Mouse-ear cress) protein is Putative receptor-like protein kinase At3g47110.